The chain runs to 119 residues: Probable non-functional T cell receptor gamma variable 10 (119 aa).

Residues 1–19 form the signal peptide; the sequence is MSLLEAFAFSSWALGLGLS. Residues 24–119 form the Ig-like domain; that stretch reads FQLSISTEVK…MAVYYCAAWD (96 aa). A disulfide bridge links Cys-40 with Cys-115.

As to quaternary structure, gamma-delta TR is a heterodimer composed of a gamma and delta chain; disulfide-linked. The gamma-delta TR is associated with the transmembrane signaling CD3 coreceptor proteins following the stoichiometry: a single gamma-delta TR heterodimer associates with one CD3D-CD3E heterodimer, one CD3G-CD3E heterodimer and one CD247 homodimer forming a stable octameric structure. Upon activation, gamma-delta TR complex associates with FCER1G to initiate intracellular signaling.

The protein localises to the cell membrane. Functionally, probable non-functional open reading frame (ORF) of V region of the variable domain of T cell receptor (TR) gamma chain. Non-functional ORF generally cannot participate in the synthesis of a productive T cell receptor (TR) chain due to altered V-(D)-J or switch recombination and/or splicing site (at mRNA level) and/or conserved amino acid change (protein level). Gamma-delta TRs recognize a variety of self and foreign non-peptide antigens frequently expressed at the epithelial boundaries between the host and external environment, including endogenous lipids presented by MH-like protein CD1D and phosphoantigens presented by butyrophilin-like molecule BTN3A1. Upon antigen recognition induces rapid, innate-like immune responses involved in pathogen clearance and tissue repair. Binding of gamma-delta TR complex to antigen triggers phosphorylation of immunoreceptor tyrosine-based activation motifs (ITAMs) in the CD3 chains by the LCK and FYN kinases, allowing the recruitment, phosphorylation, and activation of ZAP70 that facilitates phosphorylation of the scaffolding proteins LCP2 and LAT. This lead to the formation of a supramolecular signalosome that recruits the phospholipase PLCG1, resulting in calcium mobilization and ERK activation, ultimately leading to T cell expansion and differentiation into effector cells. Gamma-delta TRs are produced through somatic rearrangement of a limited repertoire of variable (V), diversity (D), and joining (J) genes. The potential diversity of gamma-delta TRs is conferred by the unique ability to rearrange (D) genes in tandem and to utilize all three reading frames. The combinatorial diversity is considerably increased by the sequence exonuclease trimming and random nucleotide (N) region additions which occur during the V-(D)-J rearrangements. The protein is Probable non-functional T cell receptor gamma variable 10 of Homo sapiens (Human).